The sequence spans 169 residues: Transcription antitermination protein NusB (169 aa).

Belongs to the NusB family.

Functionally, involved in transcription antitermination. Required for transcription of ribosomal RNA (rRNA) genes. Binds specifically to the boxA antiterminator sequence of the ribosomal RNA (rrn) operons. The polypeptide is Transcription antitermination protein NusB (Deinococcus geothermalis (strain DSM 11300 / CIP 105573 / AG-3a)).